The sequence spans 687 residues: Protein SDA1 homolog (687 aa).

Disordered stretches follow at residues 517-549 (SSDEEQEDEDPSGENQEGEEDGQTRAARISQMR), 561-587 (MKQLTKEVQPKLGKKRKRATTTEEPQG), and 615-687 (TVIA…KSKI). Residues 520–537 (EEQEDEDPSGENQEGEED) are compositionally biased toward acidic residues. Residues 644 to 666 (EKRRKKNFMMMRHNKLVRGKTKR) are compositionally biased toward basic residues. Residues 667–680 (SFRDKQIALRDSLL) show a composition bias toward basic and acidic residues.

The protein belongs to the SDA1 family.

The protein resides in the nucleus. It localises to the nucleolus. Required for 60S pre-ribosomal subunits export to the cytoplasm. The chain is Protein SDA1 homolog (sdad1) from Nematostella vectensis (Starlet sea anemone).